A 190-amino-acid polypeptide reads, in one-letter code: MKLISNILYVIIFTLIIVLTLVVISTRSSGGEPAVFGYTLKSVLSGSMEPEFNTGSLILVKEITDVKELQKGDVITFMQDANTAVTHRIVDITKQGDHLLFKTKGDNNAAADSAPVSDENVRAQYTGFQLPYAGYMLHFASQPIGTAVLLIVPGVMLLVYAFVTISSAIREIERKTKALETDTKDSTMST.

A helical transmembrane segment spans residues 4 to 24 (ISNILYVIIFTLIIVLTLVVI). The active site involves Ser45. The chain crosses the membrane as a helical span at residues 143–163 (PIGTAVLLIVPGVMLLVYAFV).

This sequence belongs to the peptidase S26B family.

It is found in the cell membrane. It carries out the reaction Cleavage of hydrophobic, N-terminal signal or leader sequences from secreted and periplasmic proteins.. In terms of biological role, required for the cleavage of the signal sequence of TasA and TapA, which are involved in biofilm formation. The sequence is that of Signal peptidase I W from Bacillus subtilis (strain 168).